Reading from the N-terminus, the 482-residue chain is Thymidine phosphorylase (482 aa).

Residues 1–10 (MAALMTPGTG) constitute a propeptide that is removed on maturation. The disordered stretch occupies residues 1–36 (MAALMTPGTGAPPAPGDFSGEGSQGLPDPSPEPKQL). Thr-6 carries the phosphothreonine modification. Substrate-binding residues include His-116, Arg-202, Ser-217, and Lys-221. R-V-A-A-A-L-X(5,6)-L-G-R repeat units follow at residues 265-279 (RVAA…PLGR) and 329-342 (RVAA…ALGR). 2 R-A-L-X-X-A-L-V-L repeats span residues 393–401 (RALPLALVL) and 453–461 (RALQEALVL).

Belongs to the thymidine/pyrimidine-nucleoside phosphorylase family. In terms of assembly, homodimer.

It carries out the reaction thymidine + phosphate = 2-deoxy-alpha-D-ribose 1-phosphate + thymine. The protein operates within pyrimidine metabolism; dTMP biosynthesis via salvage pathway; dTMP from thymine: step 1/2. In terms of biological role, may have a role in maintaining the integrity of the blood vessels. Has growth promoting activity on endothelial cells, angiogenic activity in vivo and chemotactic activity on endothelial cells in vitro. Catalyzes the reversible phosphorolysis of thymidine. The produced molecules are then utilized as carbon and energy sources or in the rescue of pyrimidine bases for nucleotide synthesis. This Homo sapiens (Human) protein is Thymidine phosphorylase.